Consider the following 439-residue polypeptide: Tol-Pal system protein TolB (439 aa).

The N-terminal stretch at 1-24 (MRNGMRKIIAGVFIFVFLISNLYA) is a signal peptide.

It belongs to the TolB family. In terms of assembly, the Tol-Pal system is composed of five core proteins: the inner membrane proteins TolA, TolQ and TolR, the periplasmic protein TolB and the outer membrane protein Pal. They form a network linking the inner and outer membranes and the peptidoglycan layer.

It localises to the periplasm. Functionally, part of the Tol-Pal system, which plays a role in outer membrane invagination during cell division and is important for maintaining outer membrane integrity. The protein is Tol-Pal system protein TolB of Francisella tularensis subsp. tularensis (strain FSC 198).